The primary structure comprises 427 residues: Trigger factor (427 aa).

A PPIase FKBP-type domain is found at 163-248; that stretch reads GDTVVIDFVG…VHEVKAKEVP (86 aa).

It belongs to the FKBP-type PPIase family. Tig subfamily.

The protein resides in the cytoplasm. The enzyme catalyses [protein]-peptidylproline (omega=180) = [protein]-peptidylproline (omega=0). In terms of biological role, involved in protein export. Acts as a chaperone by maintaining the newly synthesized protein in an open conformation. Functions as a peptidyl-prolyl cis-trans isomerase. The polypeptide is Trigger factor (Streptococcus equi subsp. equi (strain 4047)).